We begin with the raw amino-acid sequence, 593 residues long: Serine/threonine-protein kinase SSN3 (593 aa).

One can recognise a Protein kinase domain in the interval 90 to 489; the sequence is YEIIGYIAAG…AIDALDHVYF (400 aa). 96-104 serves as a coordination point for ATP; that stretch reads IAAGTYGKV. The segment at 161 to 199 is disordered; it reads KPSHKRFTPPNNSNSTQIRSNSGSETNVRINSSSITNNS. Residues 169-185 are compositionally biased toward polar residues; that stretch reads PPNNSNSTQIRSNSGSE. Residues 186–199 show a composition bias toward low complexity; the sequence is TNVRINSSSITNNS. Lys211 contributes to the ATP binding site. Asp312 functions as the Proton acceptor in the catalytic mechanism. Disordered stretches follow at residues 517–551 and 569–593; these read DNDI…NMNG and AAVS…KKRK. A compositionally biased stretch (polar residues) spans 518 to 536; sequence NDITNVGNDNNQANHSQKQ. Residues 540-551 are compositionally biased toward low complexity; sequence GNNNNKNGNMNG. The span at 573 to 585 shows a compositional bias: polar residues; the sequence is GNGNNPTSNTATG.

The protein belongs to the protein kinase superfamily. CMGC Ser/Thr protein kinase family. CDC2/CDKX subfamily. As to quaternary structure, component of the SRB8-11 complex, a regulatory module of the Mediator complex. It depends on Mg(2+) as a cofactor.

Its subcellular location is the nucleus. The catalysed reaction is L-seryl-[protein] + ATP = O-phospho-L-seryl-[protein] + ADP + H(+). The enzyme catalyses L-threonyl-[protein] + ATP = O-phospho-L-threonyl-[protein] + ADP + H(+). It catalyses the reaction [DNA-directed RNA polymerase] + ATP = phospho-[DNA-directed RNA polymerase] + ADP + H(+). Its function is as follows. Component of the SRB8-11 complex. The SRB8-11 complex is a regulatory module of the Mediator complex which is itself involved in regulation of basal and activated RNA polymerase II-dependent transcription. The SRB8-11 complex may be involved in the transcriptional repression of a subset of genes regulated by Mediator. It may inhibit the association of the Mediator complex with RNA polymerase II to form the holoenzyme complex. The SRB8-11 complex phosphorylates the C-terminal domain (CTD) of the largest subunit of RNA polymerase II. This Kluyveromyces lactis (strain ATCC 8585 / CBS 2359 / DSM 70799 / NBRC 1267 / NRRL Y-1140 / WM37) (Yeast) protein is Serine/threonine-protein kinase SSN3 (SSN3).